Here is a 397-residue protein sequence, read N- to C-terminus: Proteinase-activated receptor 2 (397 aa).

The N-terminal stretch at 1 to 25 (MRSPSAAWLLGAAILLAASLSCSGT) is a signal peptide. The propeptide at 26-36 (IQGTNRSSKGR) is removed for receptor activation. N-linked (GlcNAc...) asparagine glycosylation is present at asparagine 30. At 37–71 (SLIGKVDGTSHVTGKGVTVETVFSVDEFSASVLTG) the chain is on the extracellular side. Residues 72–101 (KLTTVFLPIVYTIVFVVGLPSNGMALWVFL) form a helical membrane-spanning segment. At 102–108 (FRTKKKH) the chain is on the cytoplasmic side. A helical transmembrane segment spans residues 109 to 137 (PAVIYMANLALADLLSVIWFPLKIAYHIH). At 138-149 (GNNWIYGEALCN) the chain is on the extracellular side. Residues cysteine 148 and cysteine 226 are joined by a disulfide bond. The helical transmembrane segment at 150-177 (VLIGFFYGNMYCSILFMTCLSVQRYWVI) threads the bilayer. Residues 178–183 (VNPMGH) are Cytoplasmic-facing. Residues 184–211 (SRKKANIAIGISLAIWLLILLVTIPLYV) form a helical membrane-spanning segment. Over 212 to 235 (VKQTIFIPALNITTCHDVLPEQLL) the chain is Extracellular. An N-linked (GlcNAc...) asparagine glycan is attached at asparagine 222. Residues 236–269 (VGDMFNYFLSLAIGVFLFPAFLTASAYVLMIRML) form a helical membrane-spanning segment. Over 270 to 277 (RSSAMDEN) the chain is Cytoplasmic. A helical membrane pass occupies residues 278–317 (SEKKRKRAIKLIVTVLAMYLICFTPSNLLLVVHYFLIKSQ). Residues 318 to 323 (GQSHVY) lie on the Extracellular side of the membrane. Residues 324–347 (ALYIVALCLSTLNSCIDPFVYYFV) traverse the membrane as a helical segment. Topologically, residues 348–397 (SHDFRDHAKNALLCRSVRTVKQMQVSLTSKKHSRKSSSYSSSSTTVKTSY) are cytoplasmic. A lipid anchor (S-palmitoyl cysteine) is attached at cysteine 361. The interval 373–397 (SLTSKKHSRKSSSYSSSSTTVKTSY) is disordered. Positions 383 to 397 (SSSYSSSSTTVKTSY) are enriched in low complexity.

The protein belongs to the G-protein coupled receptor 1 family. Interacts with TLR4, COPS5 and TMED2. Interacts with GNAQ, GNA11, GNA12, GNA13 and GNA14. Post-translationally, a proteolytic cleavage generates a new N-terminus that functions as a tethered ligand. Activating serine proteases include trypsin, mast cell tryptase, coagulation factors VII and Xa, myeloblastin/PRTN3 and membrane-type serine protease 1/ST14. Subsequent cleavage by serine proteases, including neutrophil elastase and cathepsin G, leads to receptor deactivation. At least in part, implicated proteases are also shown to activate the receptor; the glycosylation status of the receptor is thought to contribute to the difference. In addition to conventional trypsin-like proteases activated by other proteases and glycosidases derived from bacteria, fungi and insects. Activated by serine protease allergens such as dust mite Der p3 and Der p9 and mold Pen c13. Activated by P.gingivalis arginine-specific (trypsin-like) cysteine proteinases called gingipains. Activated by S.griseus exogenous chitinase. Activated by A.alternata aspartate protease; the cleavage generates non-conventional processed forms. Proteolytically cleaved by coagulation factor Xa (F10); cleavage results in activation of F2RL1-dependent signaling. In terms of processing, N-glycosylated and sialylated. Multiple phosphorylated on serine and threonine residues in the cytoplasmic region upon receptor activation; required for receptor desensitization and recruitment of beta-arrestin. Post-translationally, monoubiquitinated by CBL at the plasma membrane and in early endosomes; not required for receptor endocytosis but for translocation to late endosomes or lysosomes. Deubiquitination involves STAMBP and USP8; required for lysosomal trafficking and receptor degradation. In terms of tissue distribution, widely expressed in tissues with especially high levels in pancreas, liver, kidney, small intestine, and colon. Moderate expression is detected in many organs, but none in brain or skeletal muscle. Expressed in endothelial cells.

The protein resides in the cell membrane. With respect to regulation, activated upon interaction by mucunain, a cowhage (Mucuna pruriens) plant cysteine proteinase. In terms of biological role, receptor for trypsin and trypsin-like enzymes coupled to G proteins. Its function is mediated through the activation of several signaling pathways including phospholipase C (PLC), intracellular calcium, mitogen-activated protein kinase (MAPK), I-kappaB kinase/NF-kappaB and Rho. Can also be transactivated by cleaved F2R/PAR1. Involved in modulation of inflammatory responses and regulation of innate and adaptive immunity, and acts as a sensor for proteolytic enzymes generated during infection. Generally is promoting inflammation. Can signal synergistically with TLR4 and probably TLR2 in inflammatory responses and modulates TLR3 signaling. Has a protective role in establishing the endothelial barrier; the activity involves coagulation factor X. Regulates endothelial cell barrier integrity during neutrophil extravasation, probably following proteolytic cleavage by PRTN3. Proposed to have a bronchoprotective role in airway epithelium, but also shown to compromise the airway epithelial barrier by interrupting E-cadherin adhesion. Involved in the regulation of vascular tone; activation results in hypotension presumably mediated by vasodilation. Associates with a subset of G proteins alpha subunits such as GNAQ, GNA11, GNA14, GNA12 and GNA13, but probably not with G(o)-alpha, G(i) subunit alpha-1 and G(i) subunit alpha-2. However, according to PubMed:21627585 can signal through G(i) subunit alpha. Believed to be a class B receptor which internalizes as a complex with arrestin and traffic with it to endosomal vesicles, presumably as desensitized receptor, for extended periods of time. Mediates inhibition of TNF-alpha stimulated JNK phosphorylation via coupling to GNAQ and GNA11; the function involves dissociation of RIPK1 and TRADD from TNFR1. Mediates phosphorylation of nuclear factor NF-kappa-B RELA subunit at 'Ser-536'; the function involves IKBKB and is predominantly independent of G proteins. Involved in cellular migration. Involved in cytoskeletal rearrangement and chemotaxis through beta-arrestin-promoted scaffolds; the function is independent of GNAQ and GNA11 and involves promotion of cofilin dephosphorylation and actin filament severing. Induces redistribution of COPS5 from the plasma membrane to the cytosol and activation of the JNK cascade is mediated by COPS5. Involved in the recruitment of leukocytes to the sites of inflammation and is the major PAR receptor capable of modulating eosinophil function such as pro-inflammatory cytokine secretion, superoxide production and degranulation. During inflammation promotes dendritic cell maturation, trafficking to the lymph nodes and subsequent T-cell activation. Involved in antimicrobial response of innate immune cells; activation enhances phagocytosis of Gram-positive and killing of Gram-negative bacteria. Acts synergistically with interferon-gamma in enhancing antiviral responses. Implicated in a number of acute and chronic inflammatory diseases such as of the joints, lungs, brain, gastrointestinal tract, periodontium, skin, and vascular systems, and in autoimmune disorders. Probably mediates activation of pro-inflammatory and pro-fibrotic responses in fibroblasts, triggered by coagulation factor Xa (F10). Mediates activation of barrier protective signaling responses in endothelial cells, triggered by coagulation factor Xa (F10). This is Proteinase-activated receptor 2 (F2RL1) from Homo sapiens (Human).